A 476-amino-acid chain; its full sequence is MASNNVGRVTQILGAVVDVQFDGELPFIQNALQTRIGDRTLILEVAQELGERTVRAIAMDSTDGLVRGAEVEDLGRPITVPVGPGTLGRILNVIGEPIDERGPVDAKKTYSIHREAPSFEEQAASAEILVTGIKVVDLLAPYLKGGKIGLFGGAGVGKTVLIQELINNIAKAHGGVSVFAGVGERTREGNDLYHEMIDAGVIKLGENTTEGSKVALVYGQMNEPPGARARVALSGLSIAEYFRDEEGQDVLFFVDNIFRFTQAGAEVSALLGRIPSAVGYQPTLATDMGALQERITSTKKGSITSVQAIYVPADDLTDPAPATSFAHLDATTVLNRAISEKGIYPAVDPLDSTSRSLDPRIVGEEHYKVARDVQRILQTYKSLQDIIAILGMDELSEEDKLTVARARKIERFMSQPFHVAEVFTGSPGVFVSIEDTVRSFKEIVEGKHDDLPEAAFLMVGTIEDARKKAEALKAKA.

152-159 (GGAGVGKT) is a binding site for ATP.

This sequence belongs to the ATPase alpha/beta chains family. As to quaternary structure, F-type ATPases have 2 components, CF(1) - the catalytic core - and CF(0) - the membrane proton channel. CF(1) has five subunits: alpha(3), beta(3), gamma(1), delta(1), epsilon(1). CF(0) has three main subunits: a(1), b(2) and c(9-12). The alpha and beta chains form an alternating ring which encloses part of the gamma chain. CF(1) is attached to CF(0) by a central stalk formed by the gamma and epsilon chains, while a peripheral stalk is formed by the delta and b chains.

It localises to the cell inner membrane. The catalysed reaction is ATP + H2O + 4 H(+)(in) = ADP + phosphate + 5 H(+)(out). Its function is as follows. Produces ATP from ADP in the presence of a proton gradient across the membrane. The catalytic sites are hosted primarily by the beta subunits. This is ATP synthase subunit beta from Granulibacter bethesdensis (strain ATCC BAA-1260 / CGDNIH1).